The chain runs to 391 residues: GATA-binding factor 6-A (391 aa).

Positions 57-111 (GAHSVNSHWSQATSESSSFNNSSPHTSSRYHYPPSPPMHNGSTRDTGYSSSLTVS) are disordered. The span at 66 to 83 (SQATSESSSFNNSSPHTS) shows a compositional bias: low complexity. Over residues 96-111 (NGSTRDTGYSSSLTVS) the composition is skewed to polar residues. GATA-type zinc fingers lie at residues 182-206 (CVNC…CNAC) and 236-260 (CANC…CNAC). The disordered stretch occupies residues 274-355 (AMKKEGIQTR…TESTSPNSNT (82 aa)). Over residues 282 to 291 (TRKRKPKTLN) the composition is skewed to basic residues. The span at 292-319 (KSKSSSSNGNSSHQISMTPTSTTSSTNS) shows a compositional bias: low complexity. Polar residues predominate over residues 326–355 (GSPSQNTTPVVASSLMSTQQTESTSPNSNT).

As to expression, in embryos, expressed in the presumptive heart mesoderm. In adults, expressed at high levels in heart, small intestine, and stomach and at lower levels in lung, pancreas and colon.

Its subcellular location is the nucleus. Transcriptional activator that binds 5'-GATA-3'-containing motifs within gene promoters. Regulates cardiac-specific transcription during embryogenesis and thereby cardiogenesis. This chain is GATA-binding factor 6-A (gata6-a), found in Xenopus laevis (African clawed frog).